The sequence spans 410 residues: Sprouty-related, EVH1 domain-containing protein 3 (410 aa).

The region spanning 1–113 is the WH1 domain; the sequence is MVRVRAVVMA…KSLLAALAAL (113 aa). Positions 117–210 are disordered; that stretch reads SLTPSSSSSS…PEPSEPLAGA (94 aa). Low complexity-rich tracts occupy residues 120 to 130 and 147 to 165; these read PSSSSSSSSPS and DSSS…AAAP. Residues 195-244 form the KBD domain; it reads LPFTGIPEPSEPLAGAGGLGWGGRGYEDYRRSGPPAPLALSTCVVRFAKT. Asymmetric dimethylarginine is present on R240. R248 bears the Omega-N-methylarginine mark. Positions 258–288 are disordered; that stretch reads LPAPLTEAAPPAPPARPPPGPGPSSAPAKAS. The span at 267-281 shows a compositional bias: pro residues; the sequence is PPAPPARPPPGPGPS. Residues 296–407 enclose the SPR domain; it reads RCVHCRALFR…CAGCGGRHEE (112 aa).

Interacts with palmitoyltransferase ZDHHC17/HIP14; the interaction leads to palmitoylation of SPRED3. Phosphorylated on tyrosine. In terms of processing, palmitoylated by ZDHHC17/HIP14. Post-translationally, ubiquitinated.

Its subcellular location is the cell membrane. In terms of biological role, tyrosine kinase substrate that inhibits growth-factor-mediated activation of MAP kinase. Inhibits fibroblast growth factor (FGF)-induced retinal lens fiber differentiation, probably by inhibiting FGF-mediated phosphorylation of ERK1/2. Inhibits TGFB-induced epithelial-to-mesenchymal transition in lens epithelial cells. The protein is Sprouty-related, EVH1 domain-containing protein 3 (SPRED3) of Homo sapiens (Human).